The following is a 192-amino-acid chain: BON1-associated protein 1 (192 aa).

The C2 domain maps to 1–119 (MIYFGRSIDN…RYSPEGHLNF (119 aa)).

As to quaternary structure, interacts with BON1 (via VWA domain), BON2 and BON3. Expressed in roots, leaves, stems and flowers.

Its subcellular location is the membrane. Functionally, negative regulator of cell death and defense responses. Exhibits calcium-dependent phospholipid binding properties. This Arabidopsis thaliana (Mouse-ear cress) protein is BON1-associated protein 1 (BAP1).